We begin with the raw amino-acid sequence, 200 residues long: Somatotropin (200 aa).

A signal peptide spans 1–22; sequence MARVLVVLSVVVASLFFSQGAT. Histidine 38 provides a ligand contact to Zn(2+). A disulfide bridge links cysteine 71 with cysteine 173. Residue glutamate 182 coordinates Zn(2+). Cysteine 190 and cysteine 198 are disulfide-bonded.

The protein belongs to the somatotropin/prolactin family.

It is found in the secreted. Growth hormone plays an important role in growth control and is involved in the regulation of several anabolic processes. Implicated as an osmoregulatory substance important for seawater adaptation. In Heteropneustes fossilis (Stinging catfish), this protein is Somatotropin (gh).